A 105-amino-acid polypeptide reads, in one-letter code: Secreted RxLR effector protein 158 (105 aa).

Positions 1-22 are cleaved as a signal peptide; sequence MRGAHYVAIVLLVAAGGQTAAG. The RxLR-dEER signature appears at 50–71; sequence RALQASRNPKDDLMFSAGDEER.

This sequence belongs to the RxLR effector family.

Its subcellular location is the secreted. The protein resides in the host nucleus. It localises to the host cytoplasm. Functionally, secreted effector that partially suppresses the host cell death induced by cell death-inducing proteins. The sequence is that of Secreted RxLR effector protein 158 from Plasmopara viticola (Downy mildew of grapevine).